We begin with the raw amino-acid sequence, 398 residues long: Dual-specificity RNA methyltransferase RlmN (398 aa).

The Proton acceptor role is filled by E119. The Radical SAM core domain maps to 125-364 (EADRATLCVS…TIVRKTRGDD (240 aa)). An intrachain disulfide couples C132 to C369. C139, C143, and C146 together coordinate [4Fe-4S] cluster. Residues 193–194 (GE), S225, 247–249 (SLH), and N326 each bind S-adenosyl-L-methionine. Catalysis depends on C369, which acts as the S-methylcysteine intermediate.

This sequence belongs to the radical SAM superfamily. RlmN family. Requires [4Fe-4S] cluster as cofactor.

The protein localises to the cytoplasm. It carries out the reaction adenosine(2503) in 23S rRNA + 2 reduced [2Fe-2S]-[ferredoxin] + 2 S-adenosyl-L-methionine = 2-methyladenosine(2503) in 23S rRNA + 5'-deoxyadenosine + L-methionine + 2 oxidized [2Fe-2S]-[ferredoxin] + S-adenosyl-L-homocysteine. The catalysed reaction is adenosine(37) in tRNA + 2 reduced [2Fe-2S]-[ferredoxin] + 2 S-adenosyl-L-methionine = 2-methyladenosine(37) in tRNA + 5'-deoxyadenosine + L-methionine + 2 oxidized [2Fe-2S]-[ferredoxin] + S-adenosyl-L-homocysteine. Specifically methylates position 2 of adenine 2503 in 23S rRNA and position 2 of adenine 37 in tRNAs. m2A2503 modification seems to play a crucial role in the proofreading step occurring at the peptidyl transferase center and thus would serve to optimize ribosomal fidelity. This chain is Dual-specificity RNA methyltransferase RlmN, found in Yersinia pestis.